A 575-amino-acid polypeptide reads, in one-letter code: Alpha-humulene synthase (575 aa).

The Mg(2+) site is built by D325, D329, D469, and E477. Positions 325–329 (DDLYD) match the DDXXD motif motif.

This sequence belongs to the terpene synthase family. Tpsa subfamily. Mg(2+) serves as cofactor. Mn(2+) is required as a cofactor.

It catalyses the reaction (2E,6E)-farnesyl diphosphate = alpha-humulene + diphosphate. Its pathway is sesquiterpene biosynthesis. It participates in terpene metabolism; oleoresin biosynthesis. Functionally, terpene synthase (TPS) involved in the biosynthesis of sesquiterpene natural products included in conifer oleoresin secretions and volatile emissions; these compounds contribute to biotic and abiotic stress defense against herbivores and pathogens. Catalyzes the conversion of (2E,6E)-farnesyl diphosphate (FPP) to (1E,4E,8E)-alpha-humulene. This chain is Alpha-humulene synthase, found in Picea glauca (White spruce).